Reading from the N-terminus, the 320-residue chain is Formimidoylglutamase (320 aa).

Mn(2+) is bound by residues histidine 125, aspartate 153, histidine 155, aspartate 157, aspartate 244, and aspartate 246.

Belongs to the arginase family. Mn(2+) serves as cofactor.

The catalysed reaction is N-formimidoyl-L-glutamate + H2O = formamide + L-glutamate. Its pathway is amino-acid degradation; L-histidine degradation into L-glutamate; L-glutamate from N-formimidoyl-L-glutamate (hydrolase route): step 1/1. In terms of biological role, catalyzes the conversion of N-formimidoyl-L-glutamate to L-glutamate and formamide. This Rhodococcus opacus (strain B4) protein is Formimidoylglutamase.